A 96-amino-acid polypeptide reads, in one-letter code: Integration host factor subunit alpha (96 aa).

Belongs to the bacterial histone-like protein family. Heterodimer of an alpha and a beta chain.

Its function is as follows. This protein is one of the two subunits of integration host factor, a specific DNA-binding protein that functions in genetic recombination as well as in transcriptional and translational control. The sequence is that of Integration host factor subunit alpha from Haemophilus influenzae (strain 86-028NP).